The sequence spans 319 residues: GTP cyclohydrolase MptA (319 aa).

This sequence belongs to the GTP cyclohydrolase IV family. As to quaternary structure, homodimer. The cofactor is Fe(2+).

It catalyses the reaction GTP + H2O = 7,8-dihydroneopterin 2',3'-cyclic phosphate + formate + diphosphate + H(+). Its pathway is cofactor biosynthesis; 5,6,7,8-tetrahydromethanopterin biosynthesis. Converts GTP to 7,8-dihydro-D-neopterin 2',3'-cyclic phosphate, the first intermediate in the biosynthesis of coenzyme methanopterin. In Methanosarcina barkeri (strain Fusaro / DSM 804), this protein is GTP cyclohydrolase MptA.